The sequence spans 172 residues: MAKMQAKVQADERDDGLREKMISVNRVTKVVKGGRILGFAALTVVGDGDGRVGMGKGKAKEVPVAVQKAMEQARRNMFKVPLKNGTLQHEVHGKHGASTVLLAPAKDGTGVIAGGPMRAVFDVMGVQNVVAKSHGSTNPYNLVRATLDGLRKQSTPADIAAKRGKSVEDILG.

Residues 17-80 form the S5 DRBM domain; it reads LREKMISVNR…EQARRNMFKV (64 aa).

The protein belongs to the universal ribosomal protein uS5 family. In terms of assembly, part of the 30S ribosomal subunit. Contacts proteins S4 and S8.

With S4 and S12 plays an important role in translational accuracy. In terms of biological role, located at the back of the 30S subunit body where it stabilizes the conformation of the head with respect to the body. The protein is Small ribosomal subunit protein uS5 of Paraburkholderia phymatum (strain DSM 17167 / CIP 108236 / LMG 21445 / STM815) (Burkholderia phymatum).